An 81-amino-acid polypeptide reads, in one-letter code: Putative membrane protein insertion efficiency factor (81 aa).

The disordered stretch occupies residues 61 to 81 (NDGGYDPVPPAPSSRTSSIAE).

The protein belongs to the UPF0161 family.

It is found in the cell inner membrane. Could be involved in insertion of integral membrane proteins into the membrane. In Pseudomonas putida (strain ATCC 47054 / DSM 6125 / CFBP 8728 / NCIMB 11950 / KT2440), this protein is Putative membrane protein insertion efficiency factor.